A 798-amino-acid chain; its full sequence is Neuroligin-1 (798 aa).

The N-terminal stretch at 1–17 (MERIYLLLLLFLPRIRS) is a signal peptide. The Extracellular portion of the chain corresponds to 18-685 (YDVRSVTTSW…AAGSFTGKAL (668 aa)). A disulfide bridge connects residues Cys-86 and Cys-125. 3 N-linked (GlcNAc...) asparagine glycosylation sites follow: Asn-164, Asn-292, and Asn-315. Residues Cys-288 and Cys-307 are joined by a disulfide bond. The segment at 636 to 676 (ANLPFPPPPMPPSPPPELTTKPKPSESPTTLQTTTESEKAA) is disordered. Residues 639-652 (PFPPPPMPPSPPPE) are compositionally biased toward pro residues. The segment covering 653-665 (LTTKPKPSESPTT) has biased composition (low complexity). The helical transmembrane segment at 686–706 (GGVIFIGCGFLIMNVCLLIAV) threads the bilayer. Residues 707 to 798 (RREWGKKRRN…QAPTLEEIQV (92 aa)) are Cytoplasmic-facing. The segment at 731-765 (HGGGAEQYNSLNSPEPLLSASHKNSTSMRPAGISP) is disordered.

This sequence belongs to the type-B carboxylesterase/lipase family. As to quaternary structure, interacts (via extracellular domain) with isoform b of madd-4; the interaction is required for the localization to postsynaptic domains. Interacts with unc-49.

Its subcellular location is the cell membrane. It localises to the synapse. Its function is as follows. Probable neuronal cell surface protein thought to be involved in cell-cell-interactions by forming intercellular junctions through binding to beta-neurexins. Plays a role in the clustering of the GABA(A) receptor unc-49 at postsynaptic sites in neuromuscular junctions (NMJs) via the interaction with madd-4 and neurexin nrx-1 and is thereby required for normal GABAergic synaptic transmission. The polypeptide is Neuroligin-1 (nlg-1) (Caenorhabditis elegans).